We begin with the raw amino-acid sequence, 584 residues long: Cation channel sperm-associated protein 2 (584 aa).

Residues 1-106 are Cytoplasmic-facing; it reads MAHERGHLQL…LWAGWVLDSS (106 aa). A helical membrane pass occupies residues 107–129; sequence IFSNFIISLIFLNTFVLMVEIEL. The Extracellular segment spans residues 130–138; that stretch reads MNSTNTSLW. A helical membrane pass occupies residues 139–164; it reads PLKLALEVTDWFILLSFIVEILLMWL. At 165–173 the chain is on the cytoplasmic side; the sequence is ASFFLFWKN. A helical transmembrane segment spans residues 174–198; the sequence is AWSVFDFVVTMLSLLPEFVVLIGVS. Residues 199 to 201 are Extracellular-facing; the sequence is ADS. A helical membrane pass occupies residues 202-220; sequence VWLQLLRVSRVLRSLKLFA. Over 221 to 237 the chain is Cytoplasmic; that stretch reads RFPQIKVILLALVRALK. The chain crosses the membrane as a helical span at residues 238–260; that stretch reads SMTFLLMLLLIFFYVFAVAGVYF. The Extracellular portion of the chain corresponds to 261-279; the sequence is FKEYSRSTIENLEYNMFFS. The segment at residues 280–292 is an intramembrane region (helical; Pore-forming); the sequence is DLLNSLVTVFILF. Topologically, residues 293 to 312 are extracellular; the sequence is TLDHWYAVLQDVWKVPEASR. Residues 313 to 339 traverse the membrane as a helical segment; that stretch reads VFSSIYVILWLLLGSIIFRNIIVAMMV. The Cytoplasmic segment spans residues 340 to 584; it reads TNFQNIRNEL…VQALMNFEDK (245 aa). A compositionally biased stretch (polar residues) spans 376 to 386; sequence SESLRGTSQGK. Disordered regions lie at residues 376 to 460 and 480 to 510; these read SESL…KGYT and AGKA…HDEA. Composition is skewed to acidic residues over residues 390–418 and 426–443; these read DITE…EEKS and EKND…EEKS. Composition is skewed to basic and acidic residues over residues 444 to 460 and 483 to 496; these read DVEK…KGYT and AENE…KEKA.

Belongs to the cation channel sperm-associated (TC 1.A.1.19) family. In terms of assembly, component of the CatSper complex or CatSpermasome composed of the core pore-forming members CATSPER1, CATSPER2, CATSPER3 and CATSPER4 as well as auxiliary members CATSPERB, CATSPERG, CATSPERD, CATSPERE, CATSPERZ, C2CD6/CATSPERT, SLCO6C1, TMEM249, TMEM262 and EFCAB9. HSPA1 may be an additional auxiliary complex member. The core complex members CATSPER1, CATSPER2, CATSPER3 and CATSPER4 form a heterotetrameric channel. The auxiliary CATSPERB, CATSPERG, CATSPERD and CATSPERE subunits form a pavilion-like structure over the pore which stabilizes the complex through interactions with CATSPER4, CATSPER3, CATSPER1 and CATSPER2 respectively. SLCO6C1 interacts with CATSPERE and TMEM262/CATSPERH interacts with CATSPERB, further stabilizing the complex. C2CD6/CATSPERT interacts at least with CATSPERD and is required for targeting the CatSper complex in the flagellar membrane. Interacts with Ca(v)3.3/CACNA1I, leading to suppression of T-type calcium channel activity.

Its subcellular location is the cell projection. It is found in the cilium. The protein resides in the flagellum membrane. The enzyme catalyses Ca(2+)(in) = Ca(2+)(out). Activated by intracellular alkalinization. In terms of biological role, pore-forming subunit of the CatSper complex, a sperm-specific voltage-gated calcium channel that plays a central role in sperm cell hyperactivation. Controls calcium entry to mediate the hyperactivated motility, a step needed for sperm motility which is essential late in the preparation of sperm for fertilization. This is Cation channel sperm-associated protein 2 (Catsper2) from Rattus norvegicus (Rat).